We begin with the raw amino-acid sequence, 537 residues long: CTP synthase (537 aa).

The interval 1 to 269 (MNQTKYIFVT…DKVALKKLDL (269 aa)) is amidoligase domain. Residue Ser-15 participates in CTP binding. Residue Ser-15 coordinates UTP. Position 16–21 (16–21 (SLGKGI)) interacts with ATP. Position 56 (Tyr-56) interacts with L-glutamine. Asp-73 serves as a coordination point for ATP. Asp-73 and Glu-143 together coordinate Mg(2+). CTP-binding positions include 150 to 152 (DIE), 190 to 195 (KTKPTQ), and Lys-226. Residues 190–195 (KTKPTQ) and Lys-226 each bind UTP. A Glutamine amidotransferase type-1 domain is found at 295 to 537 (SIGLVGKYVE…IAAAVKHKNK (243 aa)). Gly-357 lines the L-glutamine pocket. Cys-384 acts as the Nucleophile; for glutamine hydrolysis in catalysis. Residues 385 to 388 (LGMQ), Glu-408, and Arg-465 contribute to the L-glutamine site. Residues His-510 and Glu-512 contribute to the active site.

This sequence belongs to the CTP synthase family. In terms of assembly, homotetramer.

The catalysed reaction is UTP + L-glutamine + ATP + H2O = CTP + L-glutamate + ADP + phosphate + 2 H(+). It catalyses the reaction L-glutamine + H2O = L-glutamate + NH4(+). The enzyme catalyses UTP + NH4(+) + ATP = CTP + ADP + phosphate + 2 H(+). The protein operates within pyrimidine metabolism; CTP biosynthesis via de novo pathway; CTP from UDP: step 2/2. With respect to regulation, allosterically activated by GTP, when glutamine is the substrate; GTP has no effect on the reaction when ammonia is the substrate. The allosteric effector GTP functions by stabilizing the protein conformation that binds the tetrahedral intermediate(s) formed during glutamine hydrolysis. Inhibited by the product CTP, via allosteric rather than competitive inhibition. In terms of biological role, catalyzes the ATP-dependent amination of UTP to CTP with either L-glutamine or ammonia as the source of nitrogen. Regulates intracellular CTP levels through interactions with the four ribonucleotide triphosphates. The polypeptide is CTP synthase (Flavobacterium psychrophilum (strain ATCC 49511 / DSM 21280 / CIP 103535 / JIP02/86)).